Consider the following 94-residue polypeptide: Small ribosomal subunit protein uS19 (94 aa).

It belongs to the universal ribosomal protein uS19 family.

In terms of biological role, protein S19 forms a complex with S13 that binds strongly to the 16S ribosomal RNA. This Nitrosomonas eutropha (strain DSM 101675 / C91 / Nm57) protein is Small ribosomal subunit protein uS19.